The primary structure comprises 401 residues: Dual-specificity RNA methyltransferase RlmN (401 aa).

The Proton acceptor role is filled by glutamate 114. The Radical SAM core domain maps to 120–365; that stretch reads DKGRGTLCVS…TIVRRTRGDD (246 aa). A disulfide bridge connects residues cysteine 127 and cysteine 370. [4Fe-4S] cluster-binding residues include cysteine 134, cysteine 138, and cysteine 141. S-adenosyl-L-methionine contacts are provided by residues 187–188, serine 219, 241–243, and asparagine 327; these read GE and SLH. Cysteine 370 acts as the S-methylcysteine intermediate in catalysis.

It belongs to the radical SAM superfamily. RlmN family. [4Fe-4S] cluster is required as a cofactor.

The protein localises to the cytoplasm. The catalysed reaction is adenosine(2503) in 23S rRNA + 2 reduced [2Fe-2S]-[ferredoxin] + 2 S-adenosyl-L-methionine = 2-methyladenosine(2503) in 23S rRNA + 5'-deoxyadenosine + L-methionine + 2 oxidized [2Fe-2S]-[ferredoxin] + S-adenosyl-L-homocysteine. It catalyses the reaction adenosine(37) in tRNA + 2 reduced [2Fe-2S]-[ferredoxin] + 2 S-adenosyl-L-methionine = 2-methyladenosine(37) in tRNA + 5'-deoxyadenosine + L-methionine + 2 oxidized [2Fe-2S]-[ferredoxin] + S-adenosyl-L-homocysteine. In terms of biological role, specifically methylates position 2 of adenine 2503 in 23S rRNA and position 2 of adenine 37 in tRNAs. m2A2503 modification seems to play a crucial role in the proofreading step occurring at the peptidyl transferase center and thus would serve to optimize ribosomal fidelity. This Xanthomonas oryzae pv. oryzae (strain MAFF 311018) protein is Dual-specificity RNA methyltransferase RlmN.